A 292-amino-acid chain; its full sequence is 4-diphosphocytidyl-2-C-methyl-D-erythritol kinase (292 aa).

Lys-10 is a catalytic residue. 94-104 contacts ATP; the sequence is PVAAGLAGGSS. Asp-136 is an active-site residue.

Belongs to the GHMP kinase family. IspE subfamily.

It catalyses the reaction 4-CDP-2-C-methyl-D-erythritol + ATP = 4-CDP-2-C-methyl-D-erythritol 2-phosphate + ADP + H(+). Its pathway is isoprenoid biosynthesis; isopentenyl diphosphate biosynthesis via DXP pathway; isopentenyl diphosphate from 1-deoxy-D-xylulose 5-phosphate: step 3/6. Its function is as follows. Catalyzes the phosphorylation of the position 2 hydroxy group of 4-diphosphocytidyl-2C-methyl-D-erythritol. The chain is 4-diphosphocytidyl-2-C-methyl-D-erythritol kinase from Brevibacillus brevis (strain 47 / JCM 6285 / NBRC 100599).